A 201-amino-acid chain; its full sequence is Regulator of G-protein signaling 1 (201 aa).

One can recognise an RGS domain in the interval 75–191 (SLEKLLISED…LKSEIFLRLA (117 aa)).

The protein resides in the cell membrane. Its subcellular location is the cytoplasm. It is found in the cytosol. Regulates G protein-coupled receptor signaling cascades, including signaling downstream of the N-formylpeptide chemoattractant receptors and leukotriene receptors. Inhibits B cell chemotaxis. Inhibits signal transduction by increasing the GTPase activity of G protein alpha subunits, thereby driving them into their inactive GDP-bound form. This Xenopus tropicalis (Western clawed frog) protein is Regulator of G-protein signaling 1 (rgs1).